A 476-amino-acid chain; its full sequence is RuvB-like 1 (476 aa).

The tract at residues 1–23 (MDMEVDEAISGTSSSRLAPIEEV) is disordered. Residue 89 to 96 (GPPATGKT) participates in ATP binding.

This sequence belongs to the RuvB family. Forms homohexameric rings. May form a dodecamer with ruvb-2 made of two stacked hexameric rings. In terms of tissue distribution, expressed in gonadal cells.

Its subcellular location is the cytoplasm. It localises to the nucleus. The enzyme catalyses ATP + H2O = ADP + phosphate + H(+). In terms of biological role, possesses single-stranded DNA-stimulated ATPase and ATP dependent DNA helicase (3' to 5') activity suggesting a role in nuclear processes such as recombination and transcription. May participate in several chromatin remodeling complexes that mediate the ATP-dependent exchange of histones and remodel chromatin by shifting nucleosomes. Involvement in these complexes is likely required for transcriptional activation of selected genes and DNA repair in response to DNA damage. Involved in the Ce-Tor signaling pathway whereby it is required for the accumulation and localization of box C/D snoRNP to nucleoli to regulate ribosomal maturation and thus protein synthesis. Antagonizes the transcriptional activity of transcription factor pha-4, to control postembryonic development and adult longevity. Has a role in pharyngeal development. Has a role in gonadal development. This is RuvB-like 1 from Caenorhabditis elegans.